The primary structure comprises 121 residues: Large ribosomal subunit protein uL22 (121 aa).

This sequence belongs to the universal ribosomal protein uL22 family. In terms of assembly, part of the 50S ribosomal subunit.

Its function is as follows. This protein binds specifically to 23S rRNA; its binding is stimulated by other ribosomal proteins, e.g. L4, L17, and L20. It is important during the early stages of 50S assembly. It makes multiple contacts with different domains of the 23S rRNA in the assembled 50S subunit and ribosome. Functionally, the globular domain of the protein is located near the polypeptide exit tunnel on the outside of the subunit, while an extended beta-hairpin is found that lines the wall of the exit tunnel in the center of the 70S ribosome. The chain is Large ribosomal subunit protein uL22 from Synechocystis sp. (strain ATCC 27184 / PCC 6803 / Kazusa).